A 254-amino-acid polypeptide reads, in one-letter code: 4-hydroxy-tetrahydrodipicolinate reductase (254 aa).

Residues 8–13, 87–89, and 111–114 each bind NAD(+); these read GASGKM, GTT, and ATNM. H143 serves as the catalytic Proton donor/acceptor. A (S)-2,3,4,5-tetrahydrodipicolinate-binding site is contributed by H144. Catalysis depends on K147, which acts as the Proton donor. Residue 153-154 participates in (S)-2,3,4,5-tetrahydrodipicolinate binding; it reads GT.

This sequence belongs to the DapB family.

It localises to the cytoplasm. The catalysed reaction is (S)-2,3,4,5-tetrahydrodipicolinate + NAD(+) + H2O = (2S,4S)-4-hydroxy-2,3,4,5-tetrahydrodipicolinate + NADH + H(+). It carries out the reaction (S)-2,3,4,5-tetrahydrodipicolinate + NADP(+) + H2O = (2S,4S)-4-hydroxy-2,3,4,5-tetrahydrodipicolinate + NADPH + H(+). Its pathway is amino-acid biosynthesis; L-lysine biosynthesis via DAP pathway; (S)-tetrahydrodipicolinate from L-aspartate: step 4/4. Functionally, catalyzes the conversion of 4-hydroxy-tetrahydrodipicolinate (HTPA) to tetrahydrodipicolinate. The sequence is that of 4-hydroxy-tetrahydrodipicolinate reductase from Campylobacter curvus (strain 525.92).